A 408-amino-acid polypeptide reads, in one-letter code: tRNA-specific 2-thiouridylase MnmA (408 aa).

ATP-binding positions include 27–34 (AMSGGVDS) and leucine 53. Cysteine 121 functions as the Nucleophile in the catalytic mechanism. Cysteine 121 and cysteine 222 are joined by a disulfide. Glycine 145 contacts ATP. An interaction with tRNA region spans residues 172–174 (RDQ). Cysteine 222 (cysteine persulfide intermediate) is an active-site residue.

Belongs to the MnmA/TRMU family.

It localises to the cytoplasm. The enzyme catalyses S-sulfanyl-L-cysteinyl-[protein] + uridine(34) in tRNA + AH2 + ATP = 2-thiouridine(34) in tRNA + L-cysteinyl-[protein] + A + AMP + diphosphate + H(+). In terms of biological role, catalyzes the 2-thiolation of uridine at the wobble position (U34) of tRNA, leading to the formation of s(2)U34. This is tRNA-specific 2-thiouridylase MnmA from Rhizobium etli (strain ATCC 51251 / DSM 11541 / JCM 21823 / NBRC 15573 / CFN 42).